Reading from the N-terminus, the 327-residue chain is tRNA U34 carboxymethyltransferase (327 aa).

Carboxy-S-adenosyl-L-methionine is bound by residues Lys91, Trp105, Lys110, Gly130, 181-182 (IE), Met196, Tyr200, and Arg315.

It belongs to the class I-like SAM-binding methyltransferase superfamily. CmoB family. In terms of assembly, homotetramer.

The catalysed reaction is carboxy-S-adenosyl-L-methionine + 5-hydroxyuridine(34) in tRNA = 5-carboxymethoxyuridine(34) in tRNA + S-adenosyl-L-homocysteine + H(+). In terms of biological role, catalyzes carboxymethyl transfer from carboxy-S-adenosyl-L-methionine (Cx-SAM) to 5-hydroxyuridine (ho5U) to form 5-carboxymethoxyuridine (cmo5U) at position 34 in tRNAs. This chain is tRNA U34 carboxymethyltransferase, found in Pectobacterium atrosepticum (strain SCRI 1043 / ATCC BAA-672) (Erwinia carotovora subsp. atroseptica).